The sequence spans 313 residues: Ribosomal RNA small subunit methyltransferase H (313 aa).

S-adenosyl-L-methionine contacts are provided by residues 35–37, aspartate 55, phenylalanine 81, aspartate 103, and glutamine 110; that span reads GGH.

This sequence belongs to the methyltransferase superfamily. RsmH family.

It is found in the cytoplasm. The catalysed reaction is cytidine(1402) in 16S rRNA + S-adenosyl-L-methionine = N(4)-methylcytidine(1402) in 16S rRNA + S-adenosyl-L-homocysteine + H(+). Specifically methylates the N4 position of cytidine in position 1402 (C1402) of 16S rRNA. In Pseudomonas aeruginosa (strain ATCC 15692 / DSM 22644 / CIP 104116 / JCM 14847 / LMG 12228 / 1C / PRS 101 / PAO1), this protein is Ribosomal RNA small subunit methyltransferase H.